A 205-amino-acid polypeptide reads, in one-letter code: Small ribosomal subunit protein uS4 (205 aa).

Positions 18-46 (NIWGRSKSPVNRREYGPGQHGQRRKGKLS) are disordered. Residues 94-157 (RRLDAVVYRA…RQMTLVLEAQ (64 aa)) form the S4 RNA-binding domain.

This sequence belongs to the universal ribosomal protein uS4 family. In terms of assembly, part of the 30S ribosomal subunit. Contacts protein S5. The interaction surface between S4 and S5 is involved in control of translational fidelity.

Functionally, one of the primary rRNA binding proteins, it binds directly to 16S rRNA where it nucleates assembly of the body of the 30S subunit. In terms of biological role, with S5 and S12 plays an important role in translational accuracy. This is Small ribosomal subunit protein uS4 from Xanthobacter autotrophicus (strain ATCC BAA-1158 / Py2).